Consider the following 142-residue polypeptide: HTH-type transcriptional regulator LrpA1 (142 aa).

The HTH asnC-type domain occupies 1–72 (MSTESTEERI…GQSIAMVGID (72 aa)). Positions 22–41 (YAAIAERADVSKPTVRKYID) form a DNA-binding region, H-T-H motif.

In terms of biological role, transcription factor that regulates genes involved in amino acid metabolism. Represses the aspB3 gene, coding for an aspartate transaminase, in the presence of L-aspartate. Another target gene is the basal transcriptional regulator tfbB. Also binds its own promoter. In Halobacterium salinarum (strain ATCC 29341 / DSM 671 / R1), this protein is HTH-type transcriptional regulator LrpA1 (lrpA1).